We begin with the raw amino-acid sequence, 132 residues long: PGA2-homolog C27.01c (132 aa).

A helical transmembrane segment spans residues Trp17 to Leu34. Disordered stretches follow at residues Leu50–Phe90 and Glu106–Asp132. Positions Glu62–Phe75 are enriched in basic and acidic residues. Over residues Asp76–Asp87 the composition is skewed to acidic residues. Thr77 is modified (phosphothreonine). Basic and acidic residues predominate over residues Glu106 to Pro115. Residues Tyr119 to Asp132 are compositionally biased toward acidic residues.

It belongs to the PGA2 family.

It is found in the endoplasmic reticulum membrane. It localises to the nucleus membrane. In terms of biological role, involved processing and trafficking glycosylated proteins. The chain is PGA2-homolog C27.01c from Schizosaccharomyces pombe (strain 972 / ATCC 24843) (Fission yeast).